The chain runs to 275 residues: Phosphonoacetaldehyde hydrolase (275 aa).

The active-site Nucleophile is the Asp-15. The Mg(2+) site is built by Asp-15 and Ala-17. The active-site Schiff-base intermediate with substrate is Lys-56. Asp-189 is a binding site for Mg(2+).

Belongs to the HAD-like hydrolase superfamily. PhnX family. In terms of assembly, homodimer. The cofactor is Mg(2+).

It carries out the reaction phosphonoacetaldehyde + H2O = acetaldehyde + phosphate + H(+). Functionally, involved in phosphonate degradation. The sequence is that of Phosphonoacetaldehyde hydrolase from Pseudomonas fluorescens (strain SBW25).